Here is a 106-residue protein sequence, read N- to C-terminus: UPF0145 protein Cthe_0398 (106 aa).

It belongs to the UPF0145 family.

The polypeptide is UPF0145 protein Cthe_0398 (Acetivibrio thermocellus (strain ATCC 27405 / DSM 1237 / JCM 9322 / NBRC 103400 / NCIMB 10682 / NRRL B-4536 / VPI 7372) (Clostridium thermocellum)).